The chain runs to 308 residues: MLRVIVLGAAAGGGVPQWNCGCPVCRAAFDDPRLARTQASLAISADNAHWFLINASPDLRQQIIATPQLHPRAGALRHSPIAGVILTNGEVDAVAGLLSMREGAPFSIYAHDKVLAILRANSIFNVLNESIVARRPVATDQPFEPLLPDGTPSGLEITAFEVPGKGAWYLEGRTHPGGDSQSGDTLGLTITDKSTGQSLHVLTACARVTDDLKARLAGAPLLLFDGTVWRDDELITAGLGTKTGQAMGHIAMAGDDGAIAALADLDIGQKLFVHINNSNPALLAHSAERGQLETAGWQIPADGTEVTL.

It belongs to the PqqB family.

It functions in the pathway cofactor biosynthesis; pyrroloquinoline quinone biosynthesis. Functionally, may be involved in the transport of PQQ or its precursor to the periplasm. This chain is Coenzyme PQQ synthesis protein B, found in Rhodopseudomonas palustris (strain TIE-1).